The primary structure comprises 129 residues: Cytochrome b5 (129 aa).

Residues 8 to 84 form the Cytochrome b5 heme-binding domain; the sequence is TTIYTHEEVA…LEKLYIGNLK (77 aa). The heme site is built by H43 and H67. A helical membrane pass occupies residues 104-124; the sequence is GINFPLIAVGVFLAAFGVYYY.

This sequence belongs to the cytochrome b5 family.

It is found in the endoplasmic reticulum membrane. It localises to the microsome membrane. Membrane bound hemoprotein which function as an electron carrier for several membrane bound oxygenases. This Candida tropicalis (Yeast) protein is Cytochrome b5 (Cytb5).